Consider the following 258-residue polypeptide: Acetylglutamate kinase (258 aa).

Substrate-binding positions include 44–45 (GG), arginine 66, and asparagine 158. ATP-binding positions include 181-186 (DVSGIL) and 209-211 (IIT).

The protein belongs to the acetylglutamate kinase family. ArgB subfamily. In terms of assembly, homodimer.

The protein localises to the cytoplasm. The catalysed reaction is N-acetyl-L-glutamate + ATP = N-acetyl-L-glutamyl 5-phosphate + ADP. The protein operates within amino-acid biosynthesis; L-arginine biosynthesis; N(2)-acetyl-L-ornithine from L-glutamate: step 2/4. Its function is as follows. Catalyzes the ATP-dependent phosphorylation of N-acetyl-L-glutamate. The protein is Acetylglutamate kinase of Shigella dysenteriae serotype 1 (strain Sd197).